A 287-amino-acid chain; its full sequence is Elongation factor Ts (287 aa).

The tract at residues 80-83 (TDFL) is involved in Mg(2+) ion dislocation from EF-Tu.

Belongs to the EF-Ts family.

The protein localises to the cytoplasm. Its function is as follows. Associates with the EF-Tu.GDP complex and induces the exchange of GDP to GTP. It remains bound to the aminoacyl-tRNA.EF-Tu.GTP complex up to the GTP hydrolysis stage on the ribosome. This Pseudomonas syringae pv. tomato (strain ATCC BAA-871 / DC3000) protein is Elongation factor Ts.